Consider the following 451-residue polypeptide: MQRWVIHVDMDAFFASCEQLTRPTLRGRPVLVGGASGRGVVAGASYEARTFGARSAMPMYQAKALIGMRGVVVSPRFAVYRAASQRVFSILERMGGTVEKISIDEGFVEPPELYGASASEVDTWAQRLRAVIRDETGLPASVGGGAGKQVAKICSDLAKPDGIYLCAASEHEEKMYPLPVGRLWGVGPVTRTKLQQLGVETIGDLARMSEREIDISLGTTVGRSLWRLAQGHDDREVAPRAIAKQISVEHTYPKDLVTSRAVDTAIIRASRESHRRLLDDGRGARTVSVKLRMADFRIESRSATLPYATDNLDTVTATALKLARYPDEVGPIRLVGVGLSGLEDARQDILFPELDRVVPVKDTDFEVGVSDPHDSDLEISTTDESPTAIGWRATQDIWHPDYGHGWVQGLGHGKITVRFETRTTGPGKVRTFDTNDALLSSADPINSLDWS.

Residues 5–187 enclose the UmuC domain; the sequence is VIHVDMDAFF…LPVGRLWGVG (183 aa). Mg(2+)-binding residues include Asp9 and Asp104. Residue Glu105 is part of the active site.

Belongs to the DNA polymerase type-Y family. As to quaternary structure, monomer. The cofactor is Mg(2+).

It is found in the cytoplasm. It carries out the reaction DNA(n) + a 2'-deoxyribonucleoside 5'-triphosphate = DNA(n+1) + diphosphate. Poorly processive, error-prone DNA polymerase involved in untargeted mutagenesis. Copies undamaged DNA at stalled replication forks, which arise in vivo from mismatched or misaligned primer ends. These misaligned primers can be extended by PolIV. Exhibits no 3'-5' exonuclease (proofreading) activity. May be involved in translesional synthesis, in conjunction with the beta clamp from PolIII. The chain is DNA polymerase IV from Corynebacterium diphtheriae (strain ATCC 700971 / NCTC 13129 / Biotype gravis).